We begin with the raw amino-acid sequence, 315 residues long: Olfactory receptor 11A1 (315 aa).

Over 1–27 (MEIVSTGNETITEFVLLGFYDIPELHF) the chain is Extracellular. The N-linked (GlcNAc...) asparagine glycan is linked to asparagine 8. Residues 28 to 48 (LFFIVFTAVYVFIIIGNMLII) form a helical membrane-spanning segment. The Cytoplasmic portion of the chain corresponds to 49 to 56 (VAVVSSQR). A helical membrane pass occupies residues 57–77 (LHKPMYIFLANLSFLDILYTS). Residues 78–100 (AVMPKMLEGFLQEATISVAGCLL) are Extracellular-facing. Cysteine 98 and cysteine 190 form a disulfide bridge. Residues 101-121 (QFFIFGSLATAECLLLAVMAY) form a helical membrane-spanning segment. Topologically, residues 122–140 (DRYLAICYPLHYPLLMGPR) are cytoplasmic. A helical membrane pass occupies residues 141-161 (RYMGLVVTTWLSGFVVDGLVV). Residues 162 to 198 (ALVAQLRFCGPNHIDQFYCDFMLFVGLACSDPRVAQV) are Extracellular-facing. A helical membrane pass occupies residues 199–218 (TTLILSVFCLTIPFGLILTS). Residues 219 to 238 (YARIVVAVLRVPAGASRRRA) lie on the Cytoplasmic side of the membrane. Residues 239-259 (FSTCSSHLAVVTTFYGTLMIF) traverse the membrane as a helical segment. At 260-272 (YVAPSAVHSQLLS) the chain is on the extracellular side. The chain crosses the membrane as a helical span at residues 273-293 (KVFSLLYTVVTPLFNPVIYTM). Topologically, residues 294-315 (RNKEVHQALRKILCIKQTETLD) are cytoplasmic.

The protein belongs to the G-protein coupled receptor 1 family.

The protein resides in the cell membrane. Functionally, odorant receptor. This chain is Olfactory receptor 11A1 (OR11A1), found in Homo sapiens (Human).